The following is a 119-amino-acid chain: Large ribosomal subunit protein uL24 (119 aa).

Belongs to the universal ribosomal protein uL24 family. In terms of assembly, part of the 50S ribosomal subunit.

Functionally, one of two assembly initiator proteins, it binds directly to the 5'-end of the 23S rRNA, where it nucleates assembly of the 50S subunit. Its function is as follows. Located at the polypeptide exit tunnel on the outside of the subunit. The polypeptide is Large ribosomal subunit protein uL24 (Methanococcus vannielii).